Here is a 219-residue protein sequence, read N- to C-terminus: MLRAGAPTGDLPRAGEVHTGTTIMAVEFDGGVVMGSDSRVSAGEAVVNRVFDKLSPLHERIYCALSGSAADAQAVADMAAYQLELHGIELEEPPLVLAAANVVRNISYKYREDLSAHLMVAGWDQREGGQVYGTLGGMLTRQPFAIGGSGSTFIYGYVDAAYKPGMSPEECRRFTTDAIALAMSRDGSSGGVIYLVTITAAGVDHRVILGNELPKFYDE.

Positions 1–20 (MLRAGAPTGDLPRAGEVHTG) are cleaved as a propeptide — removed in mature form. The active-site Nucleophile is the threonine 21. Residues lysine 53 and lysine 109 each carry the N6-acetyllysine modification.

Belongs to the peptidase T1B family. In terms of assembly, the 26S proteasome consists of a 20S proteasome core and two 19S regulatory subunits. The 20S proteasome core is composed of 28 subunits that are arranged in four stacked rings, resulting in a barrel-shaped structure. The two end rings are each formed by seven alpha subunits, and the two central rings are each formed by seven beta subunits. The catalytic chamber with the active sites is on the inside of the barrel. Component of the immunoproteasome, where it displaces the equivalent housekeeping subunit PSMB6. Component of the spermatoproteasome, a form of the proteasome specifically found in testis. As to quaternary structure, (Microbial infection) Interacts with HIV-1 TAT protein. Post-translationally, autocleaved. The resulting N-terminal Thr residue of the mature subunit is responsible for the nucleophile proteolytic activity.

It localises to the cytoplasm. The protein resides in the nucleus. The catalysed reaction is Cleavage of peptide bonds with very broad specificity.. In terms of biological role, the proteasome is a multicatalytic proteinase complex which is characterized by its ability to cleave peptides with Arg, Phe, Tyr, Leu, and Glu adjacent to the leaving group at neutral or slightly basic pH. The proteasome has an ATP-dependent proteolytic activity. This subunit is involved in antigen processing to generate class I binding peptides. Replacement of PSMB6 by PSMB9 increases the capacity of the immunoproteasome to cleave model peptides after hydrophobic and basic residues. This is Proteasome subunit beta type-9 (PSMB9) from Homo sapiens (Human).